The primary structure comprises 318 residues: Methionyl-tRNA formyltransferase (318 aa).

112–115 (SILP) provides a ligand contact to (6S)-5,6,7,8-tetrahydrofolate.

The protein belongs to the Fmt family.

The catalysed reaction is L-methionyl-tRNA(fMet) + (6R)-10-formyltetrahydrofolate = N-formyl-L-methionyl-tRNA(fMet) + (6S)-5,6,7,8-tetrahydrofolate + H(+). Its function is as follows. Attaches a formyl group to the free amino group of methionyl-tRNA(fMet). The formyl group appears to play a dual role in the initiator identity of N-formylmethionyl-tRNA by promoting its recognition by IF2 and preventing the misappropriation of this tRNA by the elongation apparatus. This is Methionyl-tRNA formyltransferase from Shewanella baltica (strain OS195).